The following is a 430-amino-acid chain: MGYLFTSESVSEGHPDKVADQISDAVLDKLLAYDPSSKVACETLVTTGQVVLAGEVKTGAYVDLQLIAREVIQKIGYTKGEYMFESNSCGVLSAIHEQSADINRGVEREDPMNQGAGDQGMMFGYATNETENYMPLSLDLAHRILLVLADIRREGKEMTYLRPDAKSQVTIEYDDNGTPVRIDTIVVSTQHDEFILPADNSAAAQLKADEEMLAVIRKDVIEVLMPRVIASINHPKVLALFNDHIIYHVNPTGKFVIGGPHGDTGLTGRKIIVDTYGGKGAHGGGAFSGKDPSKVDRSAAYAARHIAKNLVAAGVADEMLVQVSYAIGVARPINIYVNTYGRSNVKMSDGEIARKIDELFDLRPKAIEDRLKLRYPIYSETAAYGHMGREPQMVTKHFQSRYEGDRTMEVELFTWEKLDYVDKVKAAFGL.

H14 lines the ATP pocket. D16 provides a ligand contact to Mg(2+). A K(+)-binding site is contributed by E42. L-methionine is bound by residues E55 and Q98. The segment at 98–108 (QSADINRGVER) is flexible loop. ATP contacts are provided by residues 164–166 (DAK), 254–255 (KF), D263, 269–270 (RK), A286, and K290. D263 is an L-methionine binding site. K294 is an L-methionine binding site.

Belongs to the AdoMet synthase family. As to quaternary structure, homotetramer; dimer of dimers. Mg(2+) serves as cofactor. The cofactor is K(+).

Its subcellular location is the cytoplasm. The catalysed reaction is L-methionine + ATP + H2O = S-adenosyl-L-methionine + phosphate + diphosphate. The protein operates within amino-acid biosynthesis; S-adenosyl-L-methionine biosynthesis; S-adenosyl-L-methionine from L-methionine: step 1/1. In terms of biological role, catalyzes the formation of S-adenosylmethionine (AdoMet) from methionine and ATP. The overall synthetic reaction is composed of two sequential steps, AdoMet formation and the subsequent tripolyphosphate hydrolysis which occurs prior to release of AdoMet from the enzyme. The polypeptide is S-adenosylmethionine synthase (Bacteroides fragilis (strain ATCC 25285 / DSM 2151 / CCUG 4856 / JCM 11019 / LMG 10263 / NCTC 9343 / Onslow / VPI 2553 / EN-2)).